A 466-amino-acid polypeptide reads, in one-letter code: Asparagine--tRNA ligase (466 aa).

The protein belongs to the class-II aminoacyl-tRNA synthetase family. In terms of assembly, homodimer.

The protein localises to the cytoplasm. The enzyme catalyses tRNA(Asn) + L-asparagine + ATP = L-asparaginyl-tRNA(Asn) + AMP + diphosphate + H(+). This is Asparagine--tRNA ligase from Aliivibrio fischeri (strain ATCC 700601 / ES114) (Vibrio fischeri).